Consider the following 115-residue polypeptide: Large ribosomal subunit protein bL19 (115 aa).

Belongs to the bacterial ribosomal protein bL19 family.

Its function is as follows. This protein is located at the 30S-50S ribosomal subunit interface and may play a role in the structure and function of the aminoacyl-tRNA binding site. This is Large ribosomal subunit protein bL19 from Bacillus pumilus (strain SAFR-032).